Here is a 1446-residue protein sequence, read N- to C-terminus: Sister chromatid cohesion protein PDS5 homolog B (1446 aa).

One copy of the HEAT repeat lies at 383–419 (LLVNDHLLNFVRERTLDKRWRVRKEAMMGLAQIYKKY). At lysine 1136 the chain carries N6-acetyllysine. A compositionally biased stretch (polar residues) spans 1137 to 1155 (PLSSAGKQSQTKSSRMETV). Positions 1137-1446 (PLSSAGKQSQ…RRRSSKRERR (310 aa)) are disordered. Phosphoserine is present on residues serine 1140, serine 1162, serine 1166, serine 1176, serine 1182, and serine 1191. Over residues 1156–1167 (SNASSSSNPSSP) the composition is skewed to low complexity. Over residues 1172-1184 (GRLDSSEMDHSEN) the composition is skewed to basic and acidic residues. Composition is skewed to basic and acidic residues over residues 1196-1212 (KKSD…LEKP) and 1223-1241 (PEEK…EQKP). Residues 1243 to 1252 (GSQRGRKRGR) are compositionally biased toward basic residues. A DNA-binding region (a.T hook 1) is located at residues 1247–1259 (GRKRGRTASDSDE). Position 1253 is a phosphothreonine (threonine 1253). Phosphoserine occurs at positions 1255 and 1257. Over residues 1263–1272 (PEEKRHKEEL) the composition is skewed to basic and acidic residues. Serine 1281 carries the post-translational modification Phosphoserine. The segment at residues 1285 to 1297 (KGKRGRPPKPLGG) is a DNA-binding region (a.T hook 2). Basic residues-rich tracts occupy residues 1308-1317 (TSKKGNKKKL) and 1339-1351 (SKSK…KRAQ). Polar residues predominate over residues 1353 to 1370 (RAESPETSAVESTQSTPQ). A phosphoserine mark is found at serine 1356 and serine 1364. Threonine 1365 carries the post-translational modification Phosphothreonine. Serine 1367 is subject to Phosphoserine. At threonine 1368 the chain carries Phosphothreonine. The a.T hook 3 DNA-binding region spans 1370–1382 (QKGRGRPSKAPSP). Phosphoserine occurs at positions 1381, 1415, and 1418. The segment covering 1421-1431 (TTQEGAEEEDI) has biased composition (acidic residues). Over residues 1436–1446 (VRRRSSKRERR) the composition is skewed to basic residues.

The protein belongs to the PDS5 family. Interacts with the cohesin complex. Interacts with RAD21; the interaction is direct. Interacts with WAPL (via FGF motifs) or CDCA5 (via the FGF motif); the interaction is direct, cohesin-dependent and competitive. Expressed in prostate.

The protein localises to the nucleus. Regulator of sister chromatid cohesion in mitosis which may stabilize cohesin complex association with chromatin. May couple sister chromatid cohesion during mitosis to DNA replication. Cohesion ensures that chromosome partitioning is accurate in both meiotic and mitotic cells and plays an important role in DNA repair. Plays a role in androgen-induced proliferative arrest in prostate cells. The sequence is that of Sister chromatid cohesion protein PDS5 homolog B (Pds5b) from Mus musculus (Mouse).